Consider the following 386-residue polypeptide: Methylthioribose-1-phosphate isomerase (386 aa).

Asp-261 (proton donor) is an active-site residue.

The protein belongs to the eIF-2B alpha/beta/delta subunits family. MtnA subfamily.

The protein localises to the cytoplasm. Its subcellular location is the nucleus. The catalysed reaction is 5-(methylsulfanyl)-alpha-D-ribose 1-phosphate = 5-(methylsulfanyl)-D-ribulose 1-phosphate. The protein operates within amino-acid biosynthesis; L-methionine biosynthesis via salvage pathway; L-methionine from S-methyl-5-thio-alpha-D-ribose 1-phosphate: step 1/6. Catalyzes the interconversion of methylthioribose-1-phosphate (MTR-1-P) into methylthioribulose-1-phosphate (MTRu-1-P). In Paracoccidioides brasiliensis (strain Pb03), this protein is Methylthioribose-1-phosphate isomerase.